Reading from the N-terminus, the 1048-residue chain is PH and SEC7 domain-containing protein 3 (1048 aa).

A compositionally biased stretch (basic and acidic residues) spans 36-45 (SEGKAPDTSD). Positions 36–57 (SEGKAPDTSDHGGSTLLPPNVT) are disordered. Position 76 is a phosphoserine (S76). Disordered regions lie at residues 104-126 (LDSV…LKEQ), 310-342 (GGDK…KVPR), 364-383 (SWKA…SPVR), and 395-434 (QENK…PGYT). Basic and acidic residues predominate over residues 311-321 (GDKRETQHPID). A compositionally biased stretch (basic and acidic residues) spans 397 to 423 (NKQHLEKTPKPERDRERISEQEEHVKG). Residues 534–734 (TKGTPEIAFW…KALYNSIKNE (201 aa)) enclose the SEC7 domain. A compositionally biased stretch (basic and acidic residues) spans 741–758 (DDEEKKKSPSESTEEKAN). A disordered region spans residues 741–769 (DDEEKKKSPSESTEEKANGTHPKTISRIG). S770 bears the Phosphoserine mark. The PH domain occupies 785–898 (AVYKSGFLAR…WINKINCVAA (114 aa)). Residues 922–952 (ATTTKLSQEEQLKSHESKLKQITTELAEHRS) are a coiled coil. A disordered region spans residues 999-1048 (DESEAAGLKKSHSSPSLNPDTSPITAKVKRNVSERKDHRPETPSIKQKVT). S1009, S1011, S1012, S1014, and S1020 each carry phosphoserine. Residues 1011-1022 (SSPSLNPDTSPI) show a composition bias toward polar residues. A compositionally biased stretch (basic and acidic residues) spans 1029-1039 (NVSERKDHRPE).

In terms of tissue distribution, isoform 2 is expressed in epididymis (at protein level).

Its subcellular location is the cell membrane. It localises to the cell projection. It is found in the ruffle membrane. The protein localises to the postsynaptic density. Functionally, guanine nucleotide exchange factor for ARF6. The protein is PH and SEC7 domain-containing protein 3 (PSD3) of Homo sapiens (Human).